We begin with the raw amino-acid sequence, 204 residues long: Refilin-A (204 aa).

The interval 1 to 52 (MVGHLHLQAMGDTREQSRDGLLDSPDSGLPPSPSPSPPFYALSPGTLDTRTT) is disordered. Residues 12–21 (DTREQSRDGL) are compositionally biased toward basic and acidic residues. Over residues 28-38 (GLPPSPSPSPP) the composition is skewed to pro residues. The residue at position 151 (arginine 151) is an Asymmetric dimethylarginine.

Belongs to the Refilin family. As to quaternary structure, interacts with FLNA and FLNB. Detected in various tissues, with highest expression in lung, followed by spleen.

It is found in the cytoplasm. The protein localises to the cytoskeleton. Functionally, involved in the regulation of the perinuclear actin network and nuclear shape through interaction with filamins. Plays an essential role in the formation of cartilaginous skeletal elements. The sequence is that of Refilin-A (Rflna) from Mus musculus (Mouse).